The chain runs to 1065 residues: Bifunctional cytochrome P450/NADPH--P450 reductase (1065 aa).

The tract at residues 1–479 (MEKKVSAIPQ…EDKLKNDEIK (479 aa)) is cytochrome P450. Position 405 (C405) interacts with heme. The segment at 480 to 1065 (QHVQKTPSII…RYGKDVWAGI (586 aa)) is NADPH--P450 reductase. Residues 496 to 635 (LLVLYGSDTG…QLEQWKQNMW (140 aa)) enclose the Flavodoxin-like domain. Residues 502–507 (SDTGVA), 549–552 (SYNG), 583–585 (CGD), and 591–593 (TYQ) contribute to the FMN site. An FAD-binding FR-type domain is found at 674 to 907 (YEAVYASILE…RTPQSNFELP (234 aa)).

The protein in the N-terminal section; belongs to the cytochrome P450 family. Requires heme as cofactor. It depends on FAD as a cofactor. FMN serves as cofactor.

It carries out the reaction 2 oxidized [cytochrome P450] + NADPH = 2 reduced [cytochrome P450] + NADP(+) + H(+). It catalyses the reaction an organic molecule + reduced [NADPH--hemoprotein reductase] + O2 = an alcohol + oxidized [NADPH--hemoprotein reductase] + H2O + H(+). Functions as a fatty acid monooxygenase. Catalyzes hydroxylation of fatty acids at omega-1, omega-2 and omega-3 positions, yielding primarily omega-1 and omega-2 hydroxylated products. Metabolizes unsaturated and saturated fatty acids as well as N-acylamino acids. Has a preference for long-chain unsaturated fatty acids over saturated fatty acids. Shows activity toward saturated fatty acids with a chain length of 9-18 carbons with preference for longer fatty acids. Also displays a NADPH-dependent reductase activity in the C-terminal domain, which allows electron transfer from NADPH to the heme iron of the cytochrome P450 N-terminal domain. In Bacillus cereus (strain ATCC 14579 / DSM 31 / CCUG 7414 / JCM 2152 / NBRC 15305 / NCIMB 9373 / NCTC 2599 / NRRL B-3711), this protein is Bifunctional cytochrome P450/NADPH--P450 reductase.